The chain runs to 528 residues: GMP synthase [glutamine-hydrolyzing] (528 aa).

A Glutamine amidotransferase type-1 domain is found at 13-204 (SILILDFGSQ…VYGISSCVAD (192 aa)). The active-site Nucleophile is cysteine 90. Catalysis depends on residues histidine 178 and glutamate 180. The GMPS ATP-PPase domain maps to 205–403 (WTTETYIEET…LGLPDEIIKR (199 aa)). 232-238 (SGGVDSS) is a binding site for ATP.

Homodimer.

The enzyme catalyses XMP + L-glutamine + ATP + H2O = GMP + L-glutamate + AMP + diphosphate + 2 H(+). It participates in purine metabolism; GMP biosynthesis; GMP from XMP (L-Gln route): step 1/1. Its function is as follows. Catalyzes the synthesis of GMP from XMP. This Prochlorococcus marinus (strain MIT 9312) protein is GMP synthase [glutamine-hydrolyzing].